We begin with the raw amino-acid sequence, 139 residues long: Large ribosomal subunit protein mL54 (139 aa).

The N-terminal 50 residues, 1 to 50, are a transit peptide targeting the mitochondrion; the sequence is MPFIESMAPLSRAITRGISQFSCYSNTLVLRSSRNSSSSLVKRSYVSSRV. Residues 35–50 are compositionally biased toward low complexity; that stretch reads NSSSSLVKRSYVSSRV. Residues 35-74 are disordered; the sequence is NSSSSLVKRSYVSSRVSPKKPQHNSDATSSAQKVANKTHT. The span at 58-74 shows a compositional bias: polar residues; that stretch reads NSDATSSAQKVANKTHT.

It belongs to the mitochondrion-specific ribosomal protein mL54 family. Component of the mitochondrial large ribosomal subunit (mt-LSU). Mature yeast 74S mitochondrial ribosomes consist of a small (37S) and a large (54S) subunit. The 37S small subunit contains a 15S ribosomal RNA (15S mt-rRNA) and at least 32 different proteins. The 54S large subunit contains a 21S rRNA (21S mt-rRNA) and at least 45 different proteins.

It localises to the mitochondrion. In terms of biological role, component of the mitochondrial ribosome (mitoribosome), a dedicated translation machinery responsible for the synthesis of mitochondrial genome-encoded proteins, including at least some of the essential transmembrane subunits of the mitochondrial respiratory chain. The mitoribosomes are attached to the mitochondrial inner membrane and translation products are cotranslationally integrated into the membrane. mL54 may have a meiosis-specific role as it accumulates during the middle stage of sporulation. The protein is Large ribosomal subunit protein mL54 (mrpl37) of Schizosaccharomyces pombe (strain 972 / ATCC 24843) (Fission yeast).